The sequence spans 363 residues: Mannose-1-phosphate guanyltransferase (363 aa).

This sequence belongs to the transferase hexapeptide repeat family.

The protein localises to the cytoplasm. The catalysed reaction is alpha-D-mannose 1-phosphate + GTP + H(+) = GDP-alpha-D-mannose + diphosphate. The protein operates within nucleotide-sugar biosynthesis; GDP-alpha-D-mannose biosynthesis; GDP-alpha-D-mannose from alpha-D-mannose 1-phosphate (GTP route): step 1/1. Functionally, involved in cell wall synthesis where it is required for glycosylation. Involved in cell cycle progression through cell-size checkpoint. The chain is Mannose-1-phosphate guanyltransferase (MPG1) from Yarrowia lipolytica (strain CLIB 122 / E 150) (Yeast).